Reading from the N-terminus, the 1008-residue chain is Histone deacetylase complex subunit SAP130-A (1008 aa).

The segment covering 1 to 31 (MNSQQFPRQAASMPSPQVSNSGASVGQNVQG) has biased composition (polar residues). 4 disordered regions span residues 1–44 (MNSQ…DVQS), 113–134 (SKSTMPSRPIAPAPPSAMSAVP), 415–435 (IQSDYGTERGNLIPIPGHRAS), and 617–720 (TPGG…PATI). Residues 35 to 44 (EVARDMDVQS) show a composition bias toward basic and acidic residues. Over residues 618-644 (PGGTTVMQSHSQSPGIGSSPAQGSSPR) the composition is skewed to polar residues. Low complexity predominate over residues 678–697 (ADQPSAAASLPSSHHPAAAV).

It belongs to the SAP130 family.

The protein resides in the nucleus. Functionally, acts as a transcriptional repressor. This is Histone deacetylase complex subunit SAP130-A (sap130-a) from Xenopus laevis (African clawed frog).